The chain runs to 234 residues: Polycomb group RING finger protein 5-A (234 aa).

Residues 18–57 form an RING-type zinc finger; the sequence is CSICRGYLIKPTAVTECLHTFCKSCIVQHFEESNECPECG. The disordered stretch occupies residues 97–130; sequence FWRKHKIKSNGEDGPRAKKSRLSGEDDDGNGGDY.

Component of a PRC1-like complex.

Its subcellular location is the nucleus. Component of Polycomb group (PcG) multiprotein complexes; the complex class is required to maintain the transcriptionally repressive state of some genes. The chain is Polycomb group RING finger protein 5-A from Danio rerio (Zebrafish).